A 444-amino-acid chain; its full sequence is Baeyer-Villiger oxidase ptaJ (444 aa).

The protein belongs to the questin oxidase family. Requires NADPH as cofactor.

The protein operates within secondary metabolite biosynthesis. Functionally, baeyer-Villiger oxidase; part of the gene cluster that mediates the biosynthesis of pestheic acid, a diphenyl ether which is a biosynthetic precursor of the unique chloropupukeananes. The biosynthesis initiates from condensation of acetate and malonate units catalyzed by the non-reducing PKS ptaA. As the ptaA protein is TE/CLC domain-deficient, hydrolysis and Claisen cyclization of the polyketide could be catalyzed by ptaB containing a beta-lactamase domain. The ptaB protein might hydrolyze the thioester bond between the ACP of ptaA and the intermediate to release atrochrysone carboxylic acid, which is spontaneously dehydrated to form endocrocin anthrone. Endocrocin anthrone is then converted to endocrocin, catalyzed by the anthrone oxygenase ptaC. Spontaneous decarboxylation of endocrocin occurs to generate emodin. An O-methyltransferase (ptaH or ptaI) could methylate emodin to form physcion. PtaJ could then catalyze the oxidative cleavage of physcion, and rotation of the intermediate could then afford desmethylisosulochrin. PtaF, a putative NADH-dependent oxidoreductase, might also participate in the oxidative cleavage step. Desmethylisosulochrin is then transformed by another O-methyltransferase (ptaH or ptaI) to form isosulochrin. Chlorination of isosulochrin by ptaM in the cyclohexadienone B ring then produces chloroisosulochrin. PtaE is responsible for the oxidative coupling reactions of both benzophenones isosulouchrin and chloroisosulouchrin to RES-1214-1 and pestheic acid respectively, regardless of chlorination. This is Baeyer-Villiger oxidase ptaJ from Pestalotiopsis fici (strain W106-1 / CGMCC3.15140).